Reading from the N-terminus, the 1021-residue chain is MSSTKTPISLTIKLNQFTDKPTGLDINRYHNSPIMWRNIIKQLSSRTPQKLLFSSKNRTYSFLGFGQDSVFKDNTKFRSLIPISCSNIVMGFQNLGEYLPGDEFLSRPLLKNQVNSNDFCCRKSYASVAEAVAVSSTDAEEDVSVVDEVQELLTELKKEEKKQFAFRRRKQRMLTSGMGHRKYQTLKRRQVKVETEAWEQAAKEYKELLFDMCEQKLAPNLPYVKSLFLGWFEPLRDKIAEEQELCSQGKSKAAYAKYLYQLPADMMAVITMHKLMGLLMTGGDHGTARVVQAALVIGDAIEQEVRIHNFLEKTKKQKAEKDKQKEDGEHVTQEQEKLRKKVTNLMKKQKLRAVGQIVRRQDDSKPWGQDAKAKVGSRLIELLLQTAYIQPPANQLAVDPPDIRPAFLHSVRTVAKETKSASRRYGIIQCDELVFKGLERTARHMVIPYMPMLVPPVKWTGYDKGGHLYLPSYVMRTHGARQQREAVKRASRNQLQPVFEALDTLGSTKWRINKRVLSVIDRIWAGGGRLADLVDRDDAPLPEEPDTEDEALRTKWRWKVKSVKKENRERHSQRCDIELKLAVARKMKDEEGFFYPHNVDFRGRAYPMHPHLNHLGSDICRGVLVFAEGRPLGESGLRWLKIHLANLFAGGVEKLSLEGRIAFTENHMDDIFDSADKPLEGRRWWLNAEDPFQCLAVCINLSEAVRSSSPETSISHIPVHQDGSCNGLQHYAALGRDELGAAAVNLVAGEKPADVYSGIAARVLDIMKRDAQRDPAEFPDAVRARALVNQVDRKLVKQTVMTSVYGVTYIGARDQIKRRLKERGAIADDSELFGAACYAAKVTLTALGEMFEAARSIMTWLGECAKIIASENEPVRWTTPLGLPVVQPYRKIGRHLIKTSLQILTLQQETEKVMVKRQRTAFPPNFIHSLDGSHMMMTAVACRRAGLNFAGVHDSYWTHACDVDKLNRILREKFVELYETPILEKLLESFQTSYPTLLFPPLPERGDFDLRDVLESPYFFN.

A disordered region spans residues 315–337 (KKQKAEKDKQKEDGEHVTQEQEK). Active-site residues include D722, K797, and D954.

This sequence belongs to the phage and mitochondrial RNA polymerase family.

Its subcellular location is the plastid. The protein localises to the chloroplast. The protein resides in the mitochondrion. It catalyses the reaction RNA(n) + a ribonucleoside 5'-triphosphate = RNA(n+1) + diphosphate. Its function is as follows. DNA-dependent RNA polymerase catalyzes the transcription of DNA into RNA using the four ribonucleoside triphosphates as substrates. The chain is DNA-directed RNA polymerase 2B, chloroplastic/mitochondrial (RPOT2-TOM) from Nicotiana tabacum (Common tobacco).